The primary structure comprises 334 residues: Holliday junction branch migration complex subunit RuvB (334 aa).

Positions 1 to 179 (MTHKISVLHQ…FAFTGRVDYY (179 aa)) are large ATPase domain (RuvB-L). Residues leucine 18, arginine 19, glycine 60, lysine 63, threonine 64, serine 65, 126 to 128 (EDF), arginine 169, tyrosine 179, and arginine 216 contribute to the ATP site. Threonine 64 provides a ligand contact to Mg(2+). Residues 180–250 (TDEDLVSILS…VAEKALAMLL (71 aa)) form a small ATPAse domain (RuvB-S) region. A head domain (RuvB-H) region spans residues 253–334 (NLGLNEIDIK…RNPKDRWGEE (82 aa)). The DNA site is built by arginine 308 and arginine 313.

Belongs to the RuvB family. As to quaternary structure, homohexamer. Forms an RuvA(8)-RuvB(12)-Holliday junction (HJ) complex. HJ DNA is sandwiched between 2 RuvA tetramers; dsDNA enters through RuvA and exits via RuvB. An RuvB hexamer assembles on each DNA strand where it exits the tetramer. Each RuvB hexamer is contacted by two RuvA subunits (via domain III) on 2 adjacent RuvB subunits; this complex drives branch migration. In the full resolvosome a probable DNA-RuvA(4)-RuvB(12)-RuvC(2) complex forms which resolves the HJ.

It localises to the cytoplasm. It catalyses the reaction ATP + H2O = ADP + phosphate + H(+). In terms of biological role, the RuvA-RuvB-RuvC complex processes Holliday junction (HJ) DNA during genetic recombination and DNA repair, while the RuvA-RuvB complex plays an important role in the rescue of blocked DNA replication forks via replication fork reversal (RFR). RuvA specifically binds to HJ cruciform DNA, conferring on it an open structure. The RuvB hexamer acts as an ATP-dependent pump, pulling dsDNA into and through the RuvAB complex. RuvB forms 2 homohexamers on either side of HJ DNA bound by 1 or 2 RuvA tetramers; 4 subunits per hexamer contact DNA at a time. Coordinated motions by a converter formed by DNA-disengaged RuvB subunits stimulates ATP hydrolysis and nucleotide exchange. Immobilization of the converter enables RuvB to convert the ATP-contained energy into a lever motion, pulling 2 nucleotides of DNA out of the RuvA tetramer per ATP hydrolyzed, thus driving DNA branch migration. The RuvB motors rotate together with the DNA substrate, which together with the progressing nucleotide cycle form the mechanistic basis for DNA recombination by continuous HJ branch migration. Branch migration allows RuvC to scan DNA until it finds its consensus sequence, where it cleaves and resolves cruciform DNA. In Chlamydia trachomatis serovar L2 (strain ATCC VR-902B / DSM 19102 / 434/Bu), this protein is Holliday junction branch migration complex subunit RuvB.